The primary structure comprises 626 residues: tRNA uridine 5-carboxymethylaminomethyl modification enzyme MnmG (626 aa).

13-18 (GGGHAG) contributes to the FAD binding site. Position 273 to 287 (273 to 287 (GPRYCPSIEDKIHRF)) interacts with NAD(+).

Belongs to the MnmG family. Homodimer. Heterotetramer of two MnmE and two MnmG subunits. FAD is required as a cofactor.

Its subcellular location is the cytoplasm. NAD-binding protein involved in the addition of a carboxymethylaminomethyl (cmnm) group at the wobble position (U34) of certain tRNAs, forming tRNA-cmnm(5)s(2)U34. In Acinetobacter baumannii (strain ACICU), this protein is tRNA uridine 5-carboxymethylaminomethyl modification enzyme MnmG.